The chain runs to 306 residues: Tyrosine recombinase XerD (306 aa).

Positions 1–83 constitute a Core-binding (CB) domain; sequence MGFIAQFLEM…TIKSYYEFLI (83 aa). Residues 104–299 form the Tyr recombinase domain; the sequence is KLPEILSIAQ…QTNHLKKALL (196 aa). Catalysis depends on residues R145, K176, H251, R254, and H277. Residue Y286 is the O-(3'-phospho-DNA)-tyrosine intermediate of the active site.

It belongs to the 'phage' integrase family. XerD subfamily. In terms of assembly, forms a cyclic heterotetrameric complex composed of two molecules of XerC and two molecules of XerD.

It localises to the cytoplasm. Site-specific tyrosine recombinase, which acts by catalyzing the cutting and rejoining of the recombining DNA molecules. The XerC-XerD complex is essential to convert dimers of the bacterial chromosome into monomers to permit their segregation at cell division. It also contributes to the segregational stability of plasmids. In Rickettsia conorii (strain ATCC VR-613 / Malish 7), this protein is Tyrosine recombinase XerD.